The chain runs to 261 residues: Membrane protein insertase MisCA (261 aa).

The N-terminal stretch at 1 to 22 (MLLKRRIGLLLSMVGVFMLLAG) is a signal peptide. Cysteine 23 is lipidated: N-palmitoyl cysteine. A lipid anchor (S-diacylglycerol cysteine) is attached at cysteine 23. Helical transmembrane passes span 61 to 81 (YGLS…PLMI), 131 to 151 (LAGC…YHAI), 174 to 194 (YILP…MMAG), 204 to 224 (MMLW…PAAL), and 225 to 245 (SLYW…IKGP).

This sequence belongs to the OXA1/ALB3/YidC family. Type 2 subfamily. As to quaternary structure, mostly monomeric, it may also form dimers. Interacts with SpoIIIAE. Forms a complex with the F(1)F(0) ATP synthase in which can be found the alpha, beta, gamma, delta and epsilon subunits of F(1) and a, b and subunits of F(0). YqgA is found in the same complex.

Its subcellular location is the cell membrane. Its function is as follows. Required for the insertion and/or proper folding and/or complex formation of integral membrane proteins into the membrane. Involved in integration of membrane proteins that insert both dependently and independently of the Sec translocase complex, as well as at least some lipoproteins. Also involved in protein secretion processes. Essential for sporulation by activating sigma factor SpoIIIG/SigG after engulfment is completed in the prespore, maybe by acting on SpoIIIAE. It has an overlapping, although partly distinct, function compared to YqjG(MisCB). In Bacillus subtilis (strain 168), this protein is Membrane protein insertase MisCA (misCA).